Here is a 197-residue protein sequence, read N- to C-terminus: Molybdenum cofactor guanylyltransferase (197 aa).

Residues 10–12, lysine 23, asparagine 51, aspartate 69, and aspartate 99 contribute to the GTP site; that span reads LAG. Position 99 (aspartate 99) interacts with Mg(2+).

The protein belongs to the MobA family. Monomer. Requires Mg(2+) as cofactor.

The protein resides in the cytoplasm. The enzyme catalyses Mo-molybdopterin + GTP + H(+) = Mo-molybdopterin guanine dinucleotide + diphosphate. In terms of biological role, transfers a GMP moiety from GTP to Mo-molybdopterin (Mo-MPT) cofactor (Moco or molybdenum cofactor) to form Mo-molybdopterin guanine dinucleotide (Mo-MGD) cofactor. The chain is Molybdenum cofactor guanylyltransferase from Shewanella sp. (strain MR-4).